The following is a 22-amino-acid chain: Thylakoid lumenal 11 kDa protein (22 aa).

Positions 1–22 are disordered; sequence FKGGGPYGQGVTRGQDLSGKDF.

It to A.thaliana At2g44920.

It is found in the plastid. It localises to the chloroplast thylakoid lumen. This chain is Thylakoid lumenal 11 kDa protein, found in Spinacia oleracea (Spinach).